The sequence spans 241 residues: Biosynthetic peptidoglycan transglycosylase (241 aa).

A helical membrane pass occupies residues 18 to 38; sequence GVIGIIALWMAGILIFAFLPV.

This sequence belongs to the glycosyltransferase 51 family.

The protein localises to the cell inner membrane. It catalyses the reaction [GlcNAc-(1-&gt;4)-Mur2Ac(oyl-L-Ala-gamma-D-Glu-L-Lys-D-Ala-D-Ala)](n)-di-trans,octa-cis-undecaprenyl diphosphate + beta-D-GlcNAc-(1-&gt;4)-Mur2Ac(oyl-L-Ala-gamma-D-Glu-L-Lys-D-Ala-D-Ala)-di-trans,octa-cis-undecaprenyl diphosphate = [GlcNAc-(1-&gt;4)-Mur2Ac(oyl-L-Ala-gamma-D-Glu-L-Lys-D-Ala-D-Ala)](n+1)-di-trans,octa-cis-undecaprenyl diphosphate + di-trans,octa-cis-undecaprenyl diphosphate + H(+). It participates in cell wall biogenesis; peptidoglycan biosynthesis. Peptidoglycan polymerase that catalyzes glycan chain elongation from lipid-linked precursors. This is Biosynthetic peptidoglycan transglycosylase from Yersinia pseudotuberculosis serotype O:1b (strain IP 31758).